Consider the following 311-residue polypeptide: DNA replication terminus site-binding protein (311 aa).

It belongs to the Tus family.

The protein localises to the cytoplasm. Trans-acting protein required for termination of DNA replication. Binds to DNA replication terminator sequences (terA to terF) to prevent the passage of replication forks. The termination efficiency will be affected by the affinity of this protein for the terminator sequence. This Yersinia pseudotuberculosis serotype I (strain IP32953) protein is DNA replication terminus site-binding protein.